A 229-amino-acid chain; its full sequence is Large ribosomal subunit protein uL1 (229 aa).

It belongs to the universal ribosomal protein uL1 family. In terms of assembly, part of the 50S ribosomal subunit.

Binds directly to 23S rRNA. The L1 stalk is quite mobile in the ribosome, and is involved in E site tRNA release. Its function is as follows. Protein L1 is also a translational repressor protein, it controls the translation of the L11 operon by binding to its mRNA. This Phytoplasma australiense protein is Large ribosomal subunit protein uL1.